Reading from the N-terminus, the 416-residue chain is Tyrosine-protein phosphatase non-receptor type 2 (416 aa).

Positions 5–275 (IEREFEELDA…RFSYMAIIEG (271 aa)) constitute a Tyrosine-protein phosphatase domain. Tyr22 carries the phosphotyrosine modification. Phosphoserine is present on Ser52. A Phosphotyrosine modification is found at Tyr68. Substrate contacts are provided by residues Asp182, 216–222 (CSAGIGR), and Gln260. The active-site Phosphocysteine intermediate is Cys216. Residue Cys216 is modified to S-nitrosocysteine. Residues Ser293, Ser298, Ser304, Ser320, and Ser339 each carry the phosphoserine modification. The endoplasmic reticulum location stretch occupies residues 341-410 (ESILRKRIRE…WTLLFQLNVL (70 aa)). The tract at residues 371–410 (ERKRKRWLYWQPILTKMGFVSVILVGALVGWTLLFQLNVL) is may mediate interaction with STX17.

Belongs to the protein-tyrosine phosphatase family. Non-receptor class 1 subfamily. As to quaternary structure, interacts with RMDN3. Interacts with TMED9. Interacts with STX17; dephosphorylates STX17. Interacts with ITGA1 (via cytoplasmic domain); activates the phosphatase activity towards EGFR. Interacts with TRAF2; probably involved in tumor necrosis factor-mediated signaling. Interacts with MET. Interacts with FAM220A and STAT3; interaction with FAM220A promotes interaction of PTPN2 with transcriptional activator STAT3, leading to dephosphorylation of STAT3 by PTPN2 and negative regulation of STAT3 transcriptional activator activity. Specifically phosphorylated in a cell cycle-dependent manner by cyclin-dependent kinases CDK1 and CDK2. Probably activated through phosphorylation by PKR. In terms of tissue distribution, does not show tissue- or cell-type specificity although levels of transcription show variability. Macrophages showed higher levels of expression than lymphocytes.

Its subcellular location is the cytoplasm. The protein resides in the endoplasmic reticulum-Golgi intermediate compartment. It is found in the endoplasmic reticulum. It localises to the nucleus membrane. The protein localises to the nucleus. Its subcellular location is the cell membrane. The enzyme catalyses O-phospho-L-tyrosyl-[protein] + H2O = L-tyrosyl-[protein] + phosphate. Non-receptor type tyrosine-specific phosphatase that dephosphorylates receptor protein tyrosine kinases including INSR, EGFR, CSF1R, PDGFR. Also dephosphorylates non-receptor protein tyrosine kinases like JAK1, JAK2, JAK3, Src family kinases, STAT1, STAT3 and STAT6 either in the nucleus or the cytoplasm. Negatively regulates numerous signaling pathways and biological processes like hematopoiesis, inflammatory response, cell proliferation and differentiation, and glucose homeostasis. Plays a multifaceted and important role in the development of the immune system. Functions in T-cell receptor signaling through dephosphorylation of FYN and LCK to control T-cells differentiation and activation. Dephosphorylates CSF1R, negatively regulating its downstream signaling and macrophage differentiation. Negatively regulates cytokine (IL2/interleukin-2 and interferon)-mediated signaling through dephosphorylation of the cytoplasmic kinases JAK1, JAK3 and their substrate STAT1, that propagate signaling downstream of the cytokine receptors. Also regulates the IL6/interleukin-6 and IL4/interleukin-4 cytokine signaling through dephosphorylation of STAT3 and STAT6 respectively. In addition to the immune system, it is involved in anchorage-dependent, negative regulation of EGF-stimulated cell growth. Activated by the integrin ITGA1/ITGB1, it dephosphorylates EGFR and negatively regulates EGF signaling. Dephosphorylates PDGFRB and negatively regulates platelet-derived growth factor receptor-beta signaling pathway and therefore cell proliferation. Negatively regulates tumor necrosis factor-mediated signaling downstream via MAPK through SRC dephosphorylation. May also regulate the hepatocyte growth factor receptor signaling pathway through dephosphorylation of the hepatocyte growth factor receptor MET. Also plays an important role in glucose homeostasis. For instance, negatively regulates the insulin receptor signaling pathway through the dephosphorylation of INSR and control gluconeogenesis and liver glucose production through negative regulation of the IL6 signaling pathways. May also bind DNA. This is Tyrosine-protein phosphatase non-receptor type 2 (Ptpn2) from Rattus norvegicus (Rat).